A 658-amino-acid chain; its full sequence is UvrABC system protein B (658 aa).

The Helicase ATP-binding domain occupies 25 to 178 (KSLKNNNHYQ…KNFLLKLVEM (154 aa)). Residue 38–45 (GVTGSGKT) coordinates ATP. The Beta-hairpin motif lies at 91–114 (HFDYYQPESYIPRRDLFIEKDSSI). Positions 433–607 (QVQDLFDEIK…ELKLRDDEIR (175 aa)) constitute a Helicase C-terminal domain. Residues 623–658 (EKIIKELDKKMRECAKNLDFEEAMRLRDEIAKLRTL) form the UVR domain.

The protein belongs to the UvrB family. As to quaternary structure, forms a heterotetramer with UvrA during the search for lesions. Interacts with UvrC in an incision complex.

It localises to the cytoplasm. Its function is as follows. The UvrABC repair system catalyzes the recognition and processing of DNA lesions. A damage recognition complex composed of 2 UvrA and 2 UvrB subunits scans DNA for abnormalities. Upon binding of the UvrA(2)B(2) complex to a putative damaged site, the DNA wraps around one UvrB monomer. DNA wrap is dependent on ATP binding by UvrB and probably causes local melting of the DNA helix, facilitating insertion of UvrB beta-hairpin between the DNA strands. Then UvrB probes one DNA strand for the presence of a lesion. If a lesion is found the UvrA subunits dissociate and the UvrB-DNA preincision complex is formed. This complex is subsequently bound by UvrC and the second UvrB is released. If no lesion is found, the DNA wraps around the other UvrB subunit that will check the other stand for damage. In Helicobacter pylori (strain HPAG1), this protein is UvrABC system protein B.